We begin with the raw amino-acid sequence, 358 residues long: Methylthioribose-1-phosphate isomerase (358 aa).

Substrate contacts are provided by residues 54-56 (RGA), Arg-96, and Gln-205. Asp-246 serves as the catalytic Proton donor. 256-257 (NK) contacts substrate.

This sequence belongs to the eIF-2B alpha/beta/delta subunits family. MtnA subfamily.

It catalyses the reaction 5-(methylsulfanyl)-alpha-D-ribose 1-phosphate = 5-(methylsulfanyl)-D-ribulose 1-phosphate. The protein operates within amino-acid biosynthesis; L-methionine biosynthesis via salvage pathway; L-methionine from S-methyl-5-thio-alpha-D-ribose 1-phosphate: step 1/6. Its function is as follows. Catalyzes the interconversion of methylthioribose-1-phosphate (MTR-1-P) into methylthioribulose-1-phosphate (MTRu-1-P). The polypeptide is Methylthioribose-1-phosphate isomerase (Pseudomonas paraeruginosa (strain DSM 24068 / PA7) (Pseudomonas aeruginosa (strain PA7))).